Consider the following 555-residue polypeptide: Developmental and secondary metabolism regulator veA (555 aa).

Disordered regions lie at residues 1–23, 39–60, and 234–533; these read MATRPPLSPPVNETEHSVSRITR, ERARACGAGAKSSADRRPVDPP, and RRRG…TLLS. Basic and acidic residues predominate over residues 13-23; sequence ETEHSVSRITR. In terms of domain architecture, Velvet spans 25–228; that stretch reads GKRITYKLNV…AEQGCRVRIR (204 aa). The short motif at 39–44 is the Nuclear localization signal element; it reads ERARAC. Over residues 239 to 258 the composition is skewed to basic and acidic residues; that stretch reads KRSDDYDFDEERSHRGRIPD. A compositionally biased stretch (pro residues) spans 311 to 331; that stretch reads AIPPAPAPAPPSSSTPTPVAP. 2 stretches are compositionally biased toward polar residues: residues 336–372 and 380–389; these read RSSSYTSHLSFGATRTQYPAPQLPGTPQSATTPTQVY and HARNPSTSTE. Residues 439-479 form a PEST region; the sequence is QTPSNAAPSLPPIASISAEYSNNLPQPPSNLAPSPNREPRG. Composition is skewed to basic and acidic residues over residues 492 to 503 and 519 to 533; these read RPHEDAFSHSER and ADRRPSDVHRATLLS.

The protein belongs to the velvet family. VeA subfamily. In terms of assembly, component of the heterotrimeric velvet complex composed of laeA, veA and velB; VeA acting as a bridging protein between laeA and velB.

Its subcellular location is the nucleus. The protein localises to the cytoplasm. Its function is as follows. Component of the velvet transcription factor complex that controls sexual/asexual developmental ratio in response to light, promoting sexual development in the darkness while stimulating asexual sporulation under illumination. The velvet complex hat acts as a global regulator for secondary metabolite gene expression. Increases spore dispersing capacity by impacting conidiophore architecture. This chain is Developmental and secondary metabolism regulator veA, found in Aspergillus niger (strain ATCC 1015 / CBS 113.46 / FGSC A1144 / LSHB Ac4 / NCTC 3858a / NRRL 328 / USDA 3528.7).